The sequence spans 270 residues: MKLLLSNDDGIFSPGIRTLADTLAAAGHEVMVVCPDRERSATGHGLTLFDPIRAEAVASLFHPSVKAWACSGTPSDCIKLALGALLDSLPDFVLSGINQGSNLGTDILYSGTVSAAMEGVIEGIPSMALSLTSFTVREFQPAANFARDLLAKLDHTPLPEAMLLNINVPALPAAEIAGVAITRQGIRRYHDMFKKRVDPRGKTYYWLAGEVLEDVNDPEQGVDSEMLTDVQAIRENLITITPLKYNLTHTPGLQTLSTWLNLPLLLQTDP.

Positions 8, 9, 40, and 98 each coordinate a divalent metal cation.

The protein belongs to the SurE nucleotidase family. A divalent metal cation is required as a cofactor.

It is found in the cytoplasm. The enzyme catalyses a ribonucleoside 5'-phosphate + H2O = a ribonucleoside + phosphate. Its function is as follows. Nucleotidase that shows phosphatase activity on nucleoside 5'-monophosphates. The chain is 5'-nucleotidase SurE from Cyanothece sp. (strain PCC 7425 / ATCC 29141).